Consider the following 633-residue polypeptide: NADPH-dependent diflavin oxidoreductase 1 (633 aa).

Positions 5 to 149 constitute a Flavodoxin-like domain; the sequence is CTIIYATESG…EVEKWSQELI (145 aa). Residues 11 to 16, 58 to 61, and D131 each bind FMN; these read TESGTS and STTG. An FAD-binding FR-type domain is found at 196–442; the sequence is TQFYKSKLKV…FIKESGARLP (247 aa). Residues 377–380 and 412–415 contribute to the FAD site; these read RPFS and GLCS. NADP(+) contacts are provided by residues T456, 520-521, 528-532, and D565; these read SR and KVYVQ. The disordered stretch occupies residues 580–610; the sequence is KNNNNNNNNNNNNNNNNNNNNNNNNNDDENN. The span at 581–604 shows a compositional bias: low complexity; it reads NNNNNNNNNNNNNNNNNNNNNNNN. Residue W633 coordinates FAD.

Belongs to the NADPH-dependent diflavin oxidoreductase NDOR1 family. The protein in the N-terminal section; belongs to the flavodoxin family. This sequence in the C-terminal section; belongs to the flavoprotein pyridine nucleotide cytochrome reductase family. FAD is required as a cofactor. Requires FMN as cofactor.

It localises to the cytoplasm. The enzyme catalyses 2 oxidized [2Fe-2S]-[protein] + NADPH = 2 reduced [2Fe-2S]-[protein] + NADP(+) + H(+). Functionally, NADPH-dependent reductase which is a central component of the cytosolic iron-sulfur (Fe-S) protein assembly (CIA) machinery. Transfers electrons from NADPH via its FAD and FMN prosthetic groups to the [2Fe-2S] cluster of the anamorsin/DRE2 homolog, another key component of the CIA machinery. In turn, this reduced cluster provides electrons for assembly of cytosolic iron-sulfur cluster proteins. The protein is NADPH-dependent diflavin oxidoreductase 1 (redC) of Dictyostelium discoideum (Social amoeba).